We begin with the raw amino-acid sequence, 427 residues long: 3-phosphoshikimate 1-carboxyvinyltransferase (427 aa).

Lys-20, Ser-21, and Arg-25 together coordinate 3-phosphoshikimate. Lys-20 contributes to the phosphoenolpyruvate binding site. 2 residues coordinate phosphoenolpyruvate: Gly-92 and Arg-120. 3-phosphoshikimate is bound by residues Ser-166, Gln-168, Asp-312, and Lys-339. Gln-168 provides a ligand contact to phosphoenolpyruvate. The active-site Proton acceptor is the Asp-312. Arg-343 and Arg-385 together coordinate phosphoenolpyruvate.

It belongs to the EPSP synthase family. Monomer.

It localises to the cytoplasm. It carries out the reaction 3-phosphoshikimate + phosphoenolpyruvate = 5-O-(1-carboxyvinyl)-3-phosphoshikimate + phosphate. It participates in metabolic intermediate biosynthesis; chorismate biosynthesis; chorismate from D-erythrose 4-phosphate and phosphoenolpyruvate: step 6/7. Functionally, catalyzes the transfer of the enolpyruvyl moiety of phosphoenolpyruvate (PEP) to the 5-hydroxyl of shikimate-3-phosphate (S3P) to produce enolpyruvyl shikimate-3-phosphate and inorganic phosphate. In Streptococcus thermophilus (strain ATCC BAA-250 / LMG 18311), this protein is 3-phosphoshikimate 1-carboxyvinyltransferase.